Here is a 448-residue protein sequence, read N- to C-terminus: O-Mevalon transferase yanI (448 aa).

A glycan (N-linked (GlcNAc...) asparagine) is linked at asparagine 2. The next 8 helical transmembrane spans lie at 21–41 (VLLS…LLAV), 54–74 (YGLL…PPPP), 79–96 (AVLY…ARYF), 165–185 (FVTA…LVEV), 217–237 (LIVL…VLPL), 316–336 (MLML…SYHV), 350–370 (VKYF…CWLL), and 390–410 (IVTA…PVAL).

It belongs to the wax synthase family.

Its subcellular location is the membrane. It participates in secondary metabolite biosynthesis; terpenoid biosynthesis. Its function is as follows. O-Mevalon transferase yanI; part of the gene cluster that mediates the biosynthesis of yanuthone D, a fungal isoprenoid epoxycyclohexenone that acts as an antibiotic against fungi and bacteria. The first step of the pathway is the synthesis of 6-methylsalicylic acid (6-MSA) by the polyketide synthase yanA. 6-MSA is then converted to m-cresol by the decarboxylase yanB. The cytochrome P450 monooxygenase yanC then catalyzes the oxidation of m-cresol to toluquinol. Epoxidation of toluquinol is then performed by the short chain dehydrogenase yanD, with the help of yanE, and a further prenylation by yanG leads to 7-deacetoxyyanuthone A. The next step is the hydroxylation of C-22 of 7-deacetoxyyanuthone A by the cytochrome P450 monooxygenase yanH to yield 22-deacetylyanuthone A. O-Mevalon transferase yanI then attaches mevalon to the hydroxyl group of 22-deacetylyanuthone A to produce yanuthone E. Finally, the FAD-dependent monooxygenase yanF oxidizes the hydroxyl group at C15 of yanuthone E to form yanuthone D. Furthermore, several branching points in the pathway lead to the production of yanuthones F and G from 7-deacetoxyyanuthone A; yanuthones H and I from 22-deacetylyanuthone A; and yanuthone J from yanuthone E. The sequence is that of O-Mevalon transferase yanI from Aspergillus niger (strain ATCC 1015 / CBS 113.46 / FGSC A1144 / LSHB Ac4 / NCTC 3858a / NRRL 328 / USDA 3528.7).